The chain runs to 192 residues: Orotate phosphoribosyltransferase (192 aa).

5-phospho-alpha-D-ribose 1-diphosphate contacts are provided by residues Arg-102, Lys-103, Lys-106, and 129–137 (EDVVTTGRS). 2 residues coordinate orotate: Thr-133 and Arg-161.

This sequence belongs to the purine/pyrimidine phosphoribosyltransferase family. PyrE subfamily. Homodimer. Mg(2+) is required as a cofactor.

The enzyme catalyses orotidine 5'-phosphate + diphosphate = orotate + 5-phospho-alpha-D-ribose 1-diphosphate. The protein operates within pyrimidine metabolism; UMP biosynthesis via de novo pathway; UMP from orotate: step 1/2. Functionally, catalyzes the transfer of a ribosyl phosphate group from 5-phosphoribose 1-diphosphate to orotate, leading to the formation of orotidine monophosphate (OMP). This chain is Orotate phosphoribosyltransferase, found in Prochlorococcus marinus (strain SARG / CCMP1375 / SS120).